A 74-amino-acid chain; its full sequence is uncharacterized protein (74 aa).

A coiled-coil region spans residues 29–63 (LNSKKSALQKDKELQQQAKAQESALAGEELRRRAL).

This is an uncharacterized protein from Pseudoalteromonas phage PM2 (Bacteriophage PM2).